We begin with the raw amino-acid sequence, 377 residues long: Transcription factor ast-1 (377 aa).

The tract at residues 72-143 (PNRMLYNDNT…SNGSSSSTES (72 aa)) is disordered. Low complexity-rich tracts occupy residues 96 to 109 (STSA…TSSK) and 118 to 142 (TESS…SSTE). The segment at residues 214-294 (TQLWQFLLEL…HGKRYAYKFD (81 aa)) is a DNA-binding region (ETS).

It belongs to the ETS family. In terms of tissue distribution, expressed in the A-neurons in the male-specific genital sensilla (simple sense organs) known as rays.

It localises to the nucleus. Its subcellular location is the cell projection. The protein resides in the neuron projection. In terms of biological role, transcription factor. Probably binds to DNA sequences containing the consensus motif 5'-CGGA[AT][AG]-3'. Positively modulates expression of dopamine pathway genes, acting as a terminal selector for differentiation of dopaminergic neurons; may act in concert with homeobox proteins ceh-40, ceh-43 and ceh-20. Required for axon navigation in some interneurons, perhaps acting in the same pathways as basement membrane protein nid-1 and unc-6/netrin. Plays a role in the differentiation of the ventral cord pioneer neuron AVG. Required for morphogenesis of the pharynx. This Caenorhabditis elegans protein is Transcription factor ast-1.